Reading from the N-terminus, the 145-residue chain is Large ribosomal subunit protein uL13 (145 aa).

The protein belongs to the universal ribosomal protein uL13 family. Part of the 50S ribosomal subunit.

In terms of biological role, this protein is one of the early assembly proteins of the 50S ribosomal subunit, although it is not seen to bind rRNA by itself. It is important during the early stages of 50S assembly. The protein is Large ribosomal subunit protein uL13 of Bacillus cytotoxicus (strain DSM 22905 / CIP 110041 / 391-98 / NVH 391-98).